A 319-amino-acid chain; its full sequence is Acetyl esterase (319 aa).

The short motif at 91 to 93 is the Involved in the stabilization of the negatively charged intermediate by the formation of the oxyanion hole element; sequence HGG. Active-site residues include serine 165, aspartate 262, and histidine 292.

This sequence belongs to the 'GDXG' lipolytic enzyme family. In terms of assembly, homodimer. Interacts with MalT and MelA.

Its subcellular location is the cytoplasm. In terms of biological role, displays esterase activity towards short chain fatty esters (acyl chain length of up to 8 carbons). Able to hydrolyze triacetylglycerol (triacetin) and tributyrylglycerol (tributyrin), but not trioleylglycerol (triolein) or cholesterol oleate. Negatively regulates MalT activity by antagonizing maltotriose binding. Inhibits MelA galactosidase activity. In Escherichia coli O127:H6 (strain E2348/69 / EPEC), this protein is Acetyl esterase.